A 380-amino-acid chain; its full sequence is DNA replication and repair protein RecF (380 aa).

Residue 30–37 participates in ATP binding; the sequence is GNNAQGKS.

Belongs to the RecF family.

It is found in the cytoplasm. Functionally, the RecF protein is involved in DNA metabolism; it is required for DNA replication and normal SOS inducibility. RecF binds preferentially to single-stranded, linear DNA. It also seems to bind ATP. The protein is DNA replication and repair protein RecF of Crocosphaera subtropica (strain ATCC 51142 / BH68) (Cyanothece sp. (strain ATCC 51142)).